The chain runs to 434 residues: MRVLVLGSGVIGTTSAWYLRQAGFEVTVIDRQPGPALETSFANAGQLSFGYTSPWAAPGVPKKAIGWLFEKHAPLAIKPGMDLAQYRWLWQMLRNCTHERYAINKARMVRMSEYSRDCLNELRAQIGIEFEGRDLGTTQLFRTQQQLDASAQDIEILAQYGVPYEVLDRAGIIQAEPALAHVDGLVGALRLPRDQTGDCQLFTRRLAQMCVDAGVEFRFDQDITGLEFDGDRITGVRIDGKLETADRFVVALGSYSPALVAPLGMRLPVYPLKGYSLTLPITDPAMAPTSTILDESYKVAVTRFDDRIRVGGMAEVAGFDLSLSQRRRETLELVVSDLYPKGGDLSRAQFWTGLRPATPDGTPVIGATPFRNLYLNTGHGTLGWTMACGSGRYLADLMSARQPQISTEGLDIFRYGQYGHAPQQENRTCVLPAR.

Position 3–17 (3–17) interacts with FAD; sequence VLVLGSGVIGTTSAW.

The protein belongs to the DadA oxidoreductase family. FAD is required as a cofactor.

The enzyme catalyses a D-alpha-amino acid + A + H2O = a 2-oxocarboxylate + AH2 + NH4(+). It participates in amino-acid degradation; D-alanine degradation; NH(3) and pyruvate from D-alanine: step 1/1. Functionally, oxidative deamination of D-amino acids. This is D-amino acid dehydrogenase from Stenotrophomonas maltophilia (strain K279a).